The following is a 177-amino-acid chain: MAHWRTPSRIFLVGPMGAGKSTVGRELANLLGLEFIDSDAAIEARTGVSIPWIFDIEGEAGFRAREAAVIDELTGRDGVVVATGGGAVTTPANRDLLGARGVVVYLYTPVSVQLQRTRHDTNRPLLQSDDPEARLQSLLAERDPLYREVADVVVETTGGRARSVARRIVEALQGQPS.

Residue 17–22 coordinates ATP; that stretch reads GAGKST. Ser-21 is a binding site for Mg(2+). 3 residues coordinate substrate: Asp-39, Arg-63, and Gly-85. ATP is bound at residue Arg-123. A substrate-binding site is contributed by Arg-142. Arg-160 lines the ATP pocket.

It belongs to the shikimate kinase family. Monomer. Requires Mg(2+) as cofactor.

It is found in the cytoplasm. The enzyme catalyses shikimate + ATP = 3-phosphoshikimate + ADP + H(+). It participates in metabolic intermediate biosynthesis; chorismate biosynthesis; chorismate from D-erythrose 4-phosphate and phosphoenolpyruvate: step 5/7. Its function is as follows. Catalyzes the specific phosphorylation of the 3-hydroxyl group of shikimic acid using ATP as a cosubstrate. In Halorhodospira halophila (strain DSM 244 / SL1) (Ectothiorhodospira halophila (strain DSM 244 / SL1)), this protein is Shikimate kinase.